The primary structure comprises 154 residues: MGLSDGEWQLVLNVWGKVEADIPSHGQEVLISLFKGHPETLEKFDKFKHLKSEDEMKASEELKKHGVTVLTALGGILKKKGHHEAELKPLAQSHATKHKIPVKYLEFISDAIVHVLQKKHPGDFGADAQGAMKKALELFRNDMAAKYKELGFQG.

The region spanning 2-148 is the Globin domain; it reads GLSDGEWQLV…FRNDMAAKYK (147 aa). Ser4 carries the post-translational modification Phosphoserine. His65 contacts nitrite. Residue His65 participates in O2 binding. The residue at position 68 (Thr68) is a Phosphothreonine. His94 contacts heme b.

It belongs to the globin family. Monomeric.

The protein localises to the cytoplasm. It localises to the sarcoplasm. It carries out the reaction Fe(III)-heme b-[protein] + nitric oxide + H2O = Fe(II)-heme b-[protein] + nitrite + 2 H(+). It catalyses the reaction H2O2 + AH2 = A + 2 H2O. Monomeric heme protein which primary function is to store oxygen and facilitate its diffusion within muscle tissues. Reversibly binds oxygen through a pentacoordinated heme iron and enables its timely and efficient release as needed during periods of heightened demand. Depending on the oxidative conditions of tissues and cells, and in addition to its ability to bind oxygen, it also has a nitrite reductase activity whereby it regulates the production of bioactive nitric oxide. Under stress conditions, like hypoxia and anoxia, it also protects cells against reactive oxygen species thanks to its pseudoperoxidase activity. The polypeptide is Myoglobin (MB) (Callithrix jacchus (White-tufted-ear marmoset)).